The following is a 245-amino-acid chain: 8-amino-3,8-dideoxy-manno-octulosonate cytidylyltransferase (245 aa).

Belongs to the KdsB family.

The protein localises to the cytoplasm. The catalysed reaction is 8-amino-3,8-dideoxy-alpha-D-manno-octulosonate + CTP = CMP-8-amino-3,8-dideoxy-alpha-D-manno-oct-2-ulosonate + diphosphate. The protein operates within bacterial outer membrane biogenesis; lipopolysaccharide biosynthesis. Activates KDO8N (a required 8-carbon sugar) for incorporation into bacterial lipopolysaccharide in the Shewanella genus. The polypeptide is 8-amino-3,8-dideoxy-manno-octulosonate cytidylyltransferase (Shewanella sp. (strain W3-18-1)).